A 313-amino-acid polypeptide reads, in one-letter code: Porphobilinogen deaminase (313 aa).

Residue cysteine 242 is modified to S-(dipyrrolylmethanemethyl)cysteine.

Belongs to the HMBS family. Monomer. The cofactor is dipyrromethane.

It carries out the reaction 4 porphobilinogen + H2O = hydroxymethylbilane + 4 NH4(+). It participates in porphyrin-containing compound metabolism; protoporphyrin-IX biosynthesis; coproporphyrinogen-III from 5-aminolevulinate: step 2/4. Its function is as follows. Tetrapolymerization of the monopyrrole PBG into the hydroxymethylbilane pre-uroporphyrinogen in several discrete steps. The chain is Porphobilinogen deaminase from Marinobacter nauticus (strain ATCC 700491 / DSM 11845 / VT8) (Marinobacter aquaeolei).